The sequence spans 200 residues: 2,3-bisphosphoglycerate-dependent phosphoglycerate mutase (200 aa).

H9 (tele-phosphohistidine intermediate) is an active-site residue. The active site involves H142.

The protein belongs to the phosphoglycerate mutase family. As to quaternary structure, homodimer.

It catalyses the reaction (2R)-2-phosphoglycerate = (2R)-3-phosphoglycerate. It functions in the pathway carbohydrate degradation; glycolysis; pyruvate from D-glyceraldehyde 3-phosphate: step 3/5. Catalyzes the interconversion of 2-phosphoglycerate and 3-phosphoglycerate. In Thermoplasma acidophilum (strain ATCC 25905 / DSM 1728 / JCM 9062 / NBRC 15155 / AMRC-C165), this protein is 2,3-bisphosphoglycerate-dependent phosphoglycerate mutase.